Consider the following 418-residue polypeptide: Delta(14)-sterol reductase TM7SF2 (418 aa).

The next 6 helical transmembrane spans lie at 13–35 (FGGPLGAAALLLLLPATMFHLLL), 62–81 (ALLLWLAWLGLQAALYLLPA), 102–124 (GFQALVLTALLVGLGMSAGLPLG), 129–148 (MLLPLAFVATLTAFIFSLFL), 255–277 (FGFMLAFGDMAWVPFTYSLQAQF), and 287–304 (LPMASVICLINATGYYIF). NADP(+)-binding positions include Lys311, Arg315, Leu338, Trp343, and 350–351 (NY). A helical transmembrane segment spans residues 355–377 (LIMALAWSLPCGVSHLLPYFYLL). Residues Asp390, 394–398 (CLQKY), and Tyr405 contribute to the NADP(+) site.

The protein belongs to the ERG4/ERG24 family. In terms of tissue distribution, expressed in adult heart, brain, pancreas, lung, liver, skeletal muscle, kidney, ovary, prostate, testis and adrenal gland, but not detected in placenta, spleen, thymus, small intestine, colon (mucosal lining), or peripheral blood leukocytes.

It is found in the microsome membrane. Its subcellular location is the endoplasmic reticulum membrane. The catalysed reaction is 4,4-dimethyl-5alpha-cholesta-8,24-dien-3beta-ol + NADP(+) = 4,4-dimethyl-5alpha-cholesta-8,14,24-trien-3beta-ol + NADPH + H(+). The enzyme catalyses 5alpha-cholest-8,14-dien-3beta-ol + NADPH + H(+) = 5alpha-cholest-8-en-3beta-ol + NADP(+). It carries out the reaction 4,4-dimethyl-8,14-cholestadien-3beta-ol + NADPH + H(+) = 4,4-dimethyl-5alpha-cholest-8-en-3beta-ol + NADP(+). Its pathway is steroid biosynthesis; cholesterol biosynthesis. Functionally, catalyzes the reduction of the C14-unsaturated bond of lanosterol, as part of the metabolic pathway leading to cholesterol biosynthesis. The sequence is that of Delta(14)-sterol reductase TM7SF2 (TM7SF2) from Homo sapiens (Human).